The primary structure comprises 89 residues: Small ribosomal subunit protein uS15 (89 aa).

It belongs to the universal ribosomal protein uS15 family. Part of the 30S ribosomal subunit. Forms a bridge to the 50S subunit in the 70S ribosome, contacting the 23S rRNA.

Its function is as follows. One of the primary rRNA binding proteins, it binds directly to 16S rRNA where it helps nucleate assembly of the platform of the 30S subunit by binding and bridging several RNA helices of the 16S rRNA. Functionally, forms an intersubunit bridge (bridge B4) with the 23S rRNA of the 50S subunit in the ribosome. The sequence is that of Small ribosomal subunit protein uS15 from Pseudomonas putida (strain ATCC 700007 / DSM 6899 / JCM 31910 / BCRC 17059 / LMG 24140 / F1).